Reading from the N-terminus, the 423-residue chain is MAGKVKWVTDIEKSVLINNFEKRGWVQVTENEDWNFYWMSVQTIRNVFSVETGYRLSDDQIVNHFPNHYELTRKDLMVKNIKRYRKELEKEGSPLAEKDESGKYLYLDFVPVTYMLPADYNLFVEEFRKSPSSTWIMKPCGKAQGKGIFLINKLSQIKKWSRDSKTSSFVTQSTKEAYVISLYINNPLLIGGRKFDLRLYVLVSTYRPLRCYMYKLGFCRFCTVKYTPSTSELDNMFVHLTNVAIQKHGEDYNHIHGGKWTVNNLRLYLESTRGKEVTSKLFDEIHWIIVQSLKAVAPVMNNDKHCFECYGYDIIIDDKLKPWLIEVNASPSLTSSTANDRILKYNLINDTLNIAVPNGEIPDCKWNKSPPKEVLGNYEILYDEELAQGDGAERELRSRPGQSLGPKGSRLRDAGRTVLTTWK.

The TTL domain maps to 1 to 367; it reads MAGKVKWVTD…NGEIPDCKWN (367 aa). ATP is bound by residues K138, 144 to 145, 181 to 184, and 194 to 196; these read QG, SLYI, and KFD. Q144 is a binding site for a protein. R220 serves as a coordination point for L-glutamate. 241 to 242 contributes to the ATP binding site; that stretch reads TN. K259 contributes to the L-glutamate binding site. Mg(2+) contacts are provided by D313, E326, and N328. K344 is an L-glutamate binding site. A disordered region spans residues 391 to 423; it reads GAERELRSRPGQSLGPKGSRLRDAGRTVLTTWK.

Belongs to the tubulin polyglutamylase family. In terms of assembly, part of the neuronal tubulin polyglutamylase complex which contains TPGS1, TPGS2, TTLL1, LRRC49 and NICN1. Interacts with PCM1, CSTPP1 and LRRC49. Mg(2+) is required as a cofactor.

It localises to the cytoplasm. Its subcellular location is the cytoskeleton. It is found in the cilium basal body. The protein resides in the cilium axoneme. The protein localises to the cell projection. It localises to the cilium. Its subcellular location is the flagellum. The catalysed reaction is (L-glutamyl)(n)-gamma-L-glutamyl-L-glutamyl-[protein] + L-glutamate + ATP = (L-glutamyl)(n+1)-gamma-L-glutamyl-L-glutamyl-[protein] + ADP + phosphate + H(+). Catalytic subunit of a polyglutamylase complex which modifies tubulin, generating side chains of glutamate on the gamma-carboxyl group of specific glutamate residues within the C-terminal tail of tubulin. Probably involved in the side-chain elongation step of the polyglutamylation reaction rather than the initiation step. Modifies both alpha- and beta-tubulins with a preference for the alpha-tail. Unlike most polyglutamylases of the tubulin--tyrosine ligase family, only displays a catalytic activity when in complex with other proteins as it is most likely lacking domains important for autonomous activity. Part of the neuronal tubulin polyglutamylase complex. Mediates cilia and flagella polyglutamylation which is essential for their biogenesis and motility. Involved in respiratory motile cilia function through the regulation of beating asymmetry. Essential for sperm flagella biogenesis, motility and male fertility. Involved in KLF4 glutamylation which impedes its ubiquitination, thereby leading to somatic cell reprogramming, pluripotency maintenance and embryogenesis. The protein is Polyglutamylase complex subunit TTLL1 (TTLL1) of Bos taurus (Bovine).